The primary structure comprises 757 residues: Exo-alpha-(1-&gt;6)-L-arabinopyranosidase (757 aa).

Residue aspartate 232 is part of the active site.

It belongs to the glycosyl hydrolase 3 family. In terms of assembly, homotetramer.

Its activity is regulated as follows. Completely inhibited by Cu(2+) and activated by Co(2+). Functionally, catalyzes the hydrolysis of a non-reducing terminal alpha-L-arabinopyranosidic linkage in ginsenoside Rb2 (alpha-L-arabinopyranosyl-(1-&gt;6)-alpha-D-glucopyranosyl) to release alpha-D-glucopyranosyl (Rd). It is not able to hydrolyze alpha-L-arabinofuranosyl-(1-&gt;6)-alpha-D-glucopyranosyl (Rc). The protein is Exo-alpha-(1-&gt;6)-L-arabinopyranosidase (apy) of Bifidobacterium longum.